Consider the following 347-residue polypeptide: Zinc finger protein CONSTANS-LIKE 2 (347 aa).

Zn(2+) contacts are provided by cysteine 16, cysteine 19, cysteine 39, histidine 44, cysteine 59, cysteine 62, cysteine 82, and histidine 87. The B box-type 1; atypical zinc-finger motif lies at cysteine 16–valine 58. Residues cysteine 59–isoleucine 101 form a B box-type 2; atypical zinc finger. One can recognise a CCT domain in the interval arginine 278–arginine 320.

This sequence belongs to the CONSTANS family. In terms of tissue distribution, highly expressed in leaves. Expressed at lower levels in stems, flowers and siliques. Not detected in roots.

The protein resides in the nucleus. Functionally, putative transcription factor. Does not affect flowering time. The chain is Zinc finger protein CONSTANS-LIKE 2 (COL2) from Arabidopsis thaliana (Mouse-ear cress).